A 285-amino-acid polypeptide reads, in one-letter code: Bifunctional protein FolD (285 aa).

166 to 168 (GAS) contacts NADP(+).

Belongs to the tetrahydrofolate dehydrogenase/cyclohydrolase family. As to quaternary structure, homodimer.

It carries out the reaction (6R)-5,10-methylene-5,6,7,8-tetrahydrofolate + NADP(+) = (6R)-5,10-methenyltetrahydrofolate + NADPH. The catalysed reaction is (6R)-5,10-methenyltetrahydrofolate + H2O = (6R)-10-formyltetrahydrofolate + H(+). The protein operates within one-carbon metabolism; tetrahydrofolate interconversion. Catalyzes the oxidation of 5,10-methylenetetrahydrofolate to 5,10-methenyltetrahydrofolate and then the hydrolysis of 5,10-methenyltetrahydrofolate to 10-formyltetrahydrofolate. In Thioalkalivibrio sulfidiphilus (strain HL-EbGR7), this protein is Bifunctional protein FolD.